Reading from the N-terminus, the 320-residue chain is Malate dehydrogenase (320 aa).

Residues glycine 10–glycine 15 and aspartate 34 each bind NAD(+). Substrate-binding residues include arginine 83 and arginine 89. Residues asparagine 96 and isoleucine 119 to asparagine 121 each bind NAD(+). The substrate site is built by asparagine 121 and arginine 152. Histidine 176 serves as the catalytic Proton acceptor.

Belongs to the LDH/MDH superfamily. MDH type 3 family.

The enzyme catalyses (S)-malate + NAD(+) = oxaloacetate + NADH + H(+). In terms of biological role, catalyzes the reversible oxidation of malate to oxaloacetate. The chain is Malate dehydrogenase from Brucella suis (strain ATCC 23445 / NCTC 10510).